Here is a 136-residue protein sequence, read N- to C-terminus: Large ribosomal subunit protein uL16 (136 aa).

It belongs to the universal ribosomal protein uL16 family. Part of the 50S ribosomal subunit.

Functionally, binds 23S rRNA and is also seen to make contacts with the A and possibly P site tRNAs. In Histophilus somni (strain 129Pt) (Haemophilus somnus), this protein is Large ribosomal subunit protein uL16.